Consider the following 256-residue polypeptide: Pimeloyl-[acyl-carrier protein] methyl ester esterase (256 aa).

The AB hydrolase-1 domain occupies 15–242; it reads HLVLLHGWGL…AAHAPFISHP (228 aa). Residues tryptophan 22, 82–83, and 143–147 contribute to the substrate site; these read SL and FLALQ. The active-site Nucleophile is the serine 82. Catalysis depends on residues aspartate 207 and histidine 235. Residue histidine 235 coordinates substrate.

The protein belongs to the AB hydrolase superfamily. Carboxylesterase BioH family. In terms of assembly, monomer.

The protein resides in the cytoplasm. The enzyme catalyses 6-carboxyhexanoyl-[ACP] methyl ester + H2O = 6-carboxyhexanoyl-[ACP] + methanol + H(+). It participates in cofactor biosynthesis; biotin biosynthesis. Functionally, the physiological role of BioH is to remove the methyl group introduced by BioC when the pimeloyl moiety is complete. It allows to synthesize pimeloyl-ACP via the fatty acid synthetic pathway through the hydrolysis of the ester bonds of pimeloyl-ACP esters. The chain is Pimeloyl-[acyl-carrier protein] methyl ester esterase from Escherichia coli O139:H28 (strain E24377A / ETEC).